A 187-amino-acid polypeptide reads, in one-letter code: Ribosome maturation factor RimM (187 aa).

Over residues 1–17 the composition is skewed to polar residues; the sequence is MTSTPSPSTADPNSTND. Positions 1–21 are disordered; sequence MTSTPSPSTADPNSTNDWLPV. One can recognise a PRC barrel domain in the interval 111-184; the sequence is EGEFHLLDLV…WLLLTPPPGL (74 aa).

Belongs to the RimM family. Binds ribosomal protein uS19.

It localises to the cytoplasm. Functionally, an accessory protein needed during the final step in the assembly of 30S ribosomal subunit, possibly for assembly of the head region. Essential for efficient processing of 16S rRNA. May be needed both before and after RbfA during the maturation of 16S rRNA. It has affinity for free ribosomal 30S subunits but not for 70S ribosomes. This Synechococcus sp. (strain CC9311) protein is Ribosome maturation factor RimM.